The primary structure comprises 272 residues: Bifunctional protein FolD 2 (272 aa).

NADP(+)-binding positions include 157–159 (GRS), T182, and I223.

The protein belongs to the tetrahydrofolate dehydrogenase/cyclohydrolase family. Homodimer.

It carries out the reaction (6R)-5,10-methylene-5,6,7,8-tetrahydrofolate + NADP(+) = (6R)-5,10-methenyltetrahydrofolate + NADPH. The catalysed reaction is (6R)-5,10-methenyltetrahydrofolate + H2O = (6R)-10-formyltetrahydrofolate + H(+). Its pathway is one-carbon metabolism; tetrahydrofolate interconversion. Catalyzes the oxidation of 5,10-methylenetetrahydrofolate to 5,10-methenyltetrahydrofolate and then the hydrolysis of 5,10-methenyltetrahydrofolate to 10-formyltetrahydrofolate. This Syntrophomonas wolfei subsp. wolfei (strain DSM 2245B / Goettingen) protein is Bifunctional protein FolD 2.